We begin with the raw amino-acid sequence, 176 residues long: MSRIGLKVINVPESVTVTKNGNEITVKGPKGELTREFDPRIKFEQEDGVIRFSRSNENDKAIHGTMRANLANMIEGVVNGYKKELKLIGVGYRAVAKNNVLTLNVGYSHPVEMKAPEGVTVTTSSATDVTIEGISKQVVGQFAAEIRAVRSPEPYKGKGIRYADEVVRRKEGKTGK.

The protein belongs to the universal ribosomal protein uL6 family. In terms of assembly, part of the 50S ribosomal subunit.

This protein binds to the 23S rRNA, and is important in its secondary structure. It is located near the subunit interface in the base of the L7/L12 stalk, and near the tRNA binding site of the peptidyltransferase center. The polypeptide is Large ribosomal subunit protein uL6 (Lactobacillus delbrueckii subsp. bulgaricus (strain ATCC 11842 / DSM 20081 / BCRC 10696 / JCM 1002 / NBRC 13953 / NCIMB 11778 / NCTC 12712 / WDCM 00102 / Lb 14)).